The chain runs to 370 residues: tRNA (guanine(9)-/adenine(9)-N1)-methyltransferase (370 aa).

Positions 87–292 constitute an SAM-dependent MTase TRM10-type domain; that stretch reads TPEELREKLP…KELPKRATRY (206 aa).

It belongs to the class IV-like SAM-binding methyltransferase superfamily. TRM10 family.

Its subcellular location is the cytoplasm. It catalyses the reaction adenosine(9) in tRNA + S-adenosyl-L-methionine = N(1)-methyladenosine(9) in tRNA + S-adenosyl-L-homocysteine + H(+). The catalysed reaction is guanosine(9) in tRNA + S-adenosyl-L-methionine = N(1)-methylguanosine(9) in tRNA + S-adenosyl-L-homocysteine + H(+). Its function is as follows. Catalyzes the S-adenosyl-L-methionine-dependent formation of either N(1)-methyladenine or N(1)-methylguanine at position 9 (m1A9 or m1G9) in tRNA. The sequence is that of tRNA (guanine(9)-/adenine(9)-N1)-methyltransferase from Thermococcus kodakarensis (strain ATCC BAA-918 / JCM 12380 / KOD1) (Pyrococcus kodakaraensis (strain KOD1)).